The chain runs to 138 residues: Acidic phospholipase A2 pgPLA 1b/pgPLA 2b (138 aa).

A signal peptide spans methionine 1 to glycine 16. 7 disulfides stabilise this stretch: cysteine 42-cysteine 131, cysteine 44-cysteine 60, cysteine 59-cysteine 111, cysteine 65-cysteine 138, cysteine 66-cysteine 104, cysteine 73-cysteine 97, and cysteine 91-cysteine 102. Positions 43, 45, and 47 each coordinate Ca(2+). Residue histidine 63 is part of the active site. Ca(2+) is bound at residue aspartate 64. Residue aspartate 105 is part of the active site.

This sequence belongs to the phospholipase A2 family. Group II subfamily. D49 sub-subfamily. The cofactor is Ca(2+). In terms of tissue distribution, expressed by the venom gland.

The protein localises to the secreted. The catalysed reaction is a 1,2-diacyl-sn-glycero-3-phosphocholine + H2O = a 1-acyl-sn-glycero-3-phosphocholine + a fatty acid + H(+). In terms of biological role, PLA2 catalyzes the calcium-dependent hydrolysis of the 2-acyl groups in 3-sn-phosphoglycerides. This chain is Acidic phospholipase A2 pgPLA 1b/pgPLA 2b, found in Protobothrops flavoviridis (Habu).